Consider the following 176-residue polypeptide: MTNIRKSHPLIKIVNDAFIDLPAPSNISSWWNFGSLLGVCLTVQILTGLFLAMHYTSDTATAFNSVTHICRDVNYGWLLRYLHANGASMFFICLYLHVGRGLYYGSYTYTETWNVGVILLFAVMATAFMGYVLPWGQMSFWGATVITNLLSAIPYIGTDLVEWIWGGFSVDKATLT.

The next 3 helical transmembrane spans lie at 33–53 (FGSLLGVCLTVQILTGLFLAM), 77–98 (WLLRYLHANGASMFFICLYLHV), and 113–133 (WNVGVILLFAVMATAFMGYVL). Residues histidine 83 and histidine 97 each contribute to the heme b site.

The protein belongs to the cytochrome b family. The cytochrome bc1 complex contains 11 subunits: 3 respiratory subunits (MT-CYB, CYC1 and UQCRFS1), 2 core proteins (UQCRC1 and UQCRC2) and 6 low-molecular weight proteins (UQCRH/QCR6, UQCRB/QCR7, UQCRQ/QCR8, UQCR10/QCR9, UQCR11/QCR10 and a cleavage product of UQCRFS1). This cytochrome bc1 complex then forms a dimer. Heme b is required as a cofactor.

The protein resides in the mitochondrion inner membrane. Its function is as follows. Component of the ubiquinol-cytochrome c reductase complex (complex III or cytochrome b-c1 complex) that is part of the mitochondrial respiratory chain. The b-c1 complex mediates electron transfer from ubiquinol to cytochrome c. Contributes to the generation of a proton gradient across the mitochondrial membrane that is then used for ATP synthesis. This chain is Cytochrome b (MT-CYB), found in Mormopterus kalinowskii (Kalinowski's mastiff bat).